The sequence spans 62 residues: Bowman-Birk type proteinase inhibitor (62 aa).

Cystine bridges form between Cys-8/Cys-61, Cys-9/Cys-24, Cys-12/Cys-57, Cys-14/Cys-22, Cys-31/Cys-38, Cys-35/Cys-50, and Cys-40/Cys-48.

Forms a monomer at protein concentrations of below 1 mM. At concentrations of above 2 mM, self-associates.

Its function is as follows. Inhibits trypsin but not chymotrypsin. Inhibits the trypsin-like proteinase activity present in larvae of the crop pests Adoxophyes orana, Hyphantria cunea, Lobesia botrana and Ostrinia nubilalis. The sequence is that of Bowman-Birk type proteinase inhibitor from Medicago scutellata (Snail medic).